An 89-amino-acid chain; its full sequence is Small ribosomal subunit protein uS15 (89 aa).

It belongs to the universal ribosomal protein uS15 family. In terms of assembly, part of the 30S ribosomal subunit. Forms a bridge to the 50S subunit in the 70S ribosome, contacting the 23S rRNA.

Functionally, one of the primary rRNA binding proteins, it binds directly to 16S rRNA where it helps nucleate assembly of the platform of the 30S subunit by binding and bridging several RNA helices of the 16S rRNA. Its function is as follows. Forms an intersubunit bridge (bridge B4) with the 23S rRNA of the 50S subunit in the ribosome. This is Small ribosomal subunit protein uS15 from Brucella abortus (strain S19).